Here is a 106-residue protein sequence, read N- to C-terminus: Large ribosomal subunit protein uL24 (106 aa).

Belongs to the universal ribosomal protein uL24 family. Part of the 50S ribosomal subunit.

One of two assembly initiator proteins, it binds directly to the 5'-end of the 23S rRNA, where it nucleates assembly of the 50S subunit. In terms of biological role, one of the proteins that surrounds the polypeptide exit tunnel on the outside of the subunit. This is Large ribosomal subunit protein uL24 from Desulforamulus reducens (strain ATCC BAA-1160 / DSM 100696 / MI-1) (Desulfotomaculum reducens).